The following is a 461-amino-acid chain: Photosystem II CP43 reaction center protein (461 aa).

Positions Met-1–Glu-2 are excised as a propeptide. Thr-3 is subject to N-acetylthreonine. Phosphothreonine is present on Thr-3. The next 5 membrane-spanning stretches (helical) occupy residues Leu-57–Ala-81, Leu-122–Asn-143, Lys-166–Thr-188, Thr-243–Ser-263, and Trp-279–Ala-300. Glu-355 is a [CaMn4O5] cluster binding site. Residues Arg-435–Pro-459 traverse the membrane as a helical segment.

This sequence belongs to the PsbB/PsbC family. PsbC subfamily. PSII is composed of 1 copy each of membrane proteins PsbA, PsbB, PsbC, PsbD, PsbE, PsbF, PsbH, PsbI, PsbJ, PsbK, PsbL, PsbM, PsbT, PsbX, PsbY, PsbZ, Psb30/Ycf12, at least 3 peripheral proteins of the oxygen-evolving complex and a large number of cofactors. It forms dimeric complexes. The cofactor is Binds multiple chlorophylls and provides some of the ligands for the Ca-4Mn-5O cluster of the oxygen-evolving complex. It may also provide a ligand for a Cl- that is required for oxygen evolution. PSII binds additional chlorophylls, carotenoids and specific lipids..

It localises to the plastid. Its subcellular location is the chloroplast thylakoid membrane. In terms of biological role, one of the components of the core complex of photosystem II (PSII). It binds chlorophyll and helps catalyze the primary light-induced photochemical processes of PSII. PSII is a light-driven water:plastoquinone oxidoreductase, using light energy to abstract electrons from H(2)O, generating O(2) and a proton gradient subsequently used for ATP formation. This chain is Photosystem II CP43 reaction center protein, found in Chlamydomonas moewusii (Chlamydomonas eugametos).